A 458-amino-acid chain; its full sequence is Alpha-2C adrenergic receptor (458 aa).

Topologically, residues Met-1–Val-51 are extracellular. N-linked (GlcNAc...) asparagine glycans are attached at residues Asn-19 and Asn-33. The helical transmembrane segment at Ala-52–Val-76 threads the bilayer. The Cytoplasmic segment spans residues Leu-77–Leu-88. The helical transmembrane segment at Phe-89–Met-114 threads the bilayer. The Extracellular portion of the chain corresponds to Ala-115–Cys-124. Cys-124 and Cys-202 are oxidised to a cystine. A helical transmembrane segment spans residues Gly-125–Leu-147. Residues Asp-148 to Val-168 lie on the Cytoplasmic side of the membrane. The helical transmembrane segment at Lys-169–Tyr-191 threads the bilayer. Residues Arg-192–Glu-207 are Extracellular-facing. A helical transmembrane segment spans residues Thr-208–Ala-231. The Cytoplasmic portion of the chain corresponds to Arg-232–Val-379. The disordered stretch occupies residues Ser-245 to Arg-343. Residues Arg-291–Arg-303 are compositionally biased toward basic residues. A helical transmembrane segment spans residues Leu-380 to Ile-403. At Cys-404–Lys-416 the chain is on the extracellular side. Residues Phe-417–Asn-437 form a helical membrane-spanning segment. At Gln-438–Gln-458 the chain is on the cytoplasmic side.

It belongs to the G-protein coupled receptor 1 family. Adrenergic receptor subfamily. ADRA2C sub-subfamily.

The protein resides in the cell membrane. Alpha-2 adrenergic receptors mediate the catecholamine-induced inhibition of adenylate cyclase through the action of G proteins. This is Alpha-2C adrenergic receptor (Adra2c) from Rattus norvegicus (Rat).